Reading from the N-terminus, the 160-residue chain is Protein FrzA (160 aa).

In terms of domain architecture, CheW-like spans 14-155 (EQEFFCFRVG…FSKLLQTARQ (142 aa)).

In terms of biological role, necessary for proper aggregation of cells to form fruiting bodies. FRZ genes define a system of signal transduction analogous to the enterobacterial chemotaxis systems. This Myxococcus xanthus protein is Protein FrzA (frzA).